The chain runs to 619 residues: Translation initiation factor eIF2B subunit delta (619 aa).

Residues 21 to 32 (GDYLDSKQEGKP) are compositionally biased toward basic and acidic residues. The interval 21-251 (GDYLDSKQEG…PKQRGKITKK (231 aa)) is disordered. Residues 42–56 (TNTSPVSIPTIISPP) are compositionally biased toward low complexity. Polar residues predominate over residues 57–84 (LGSNNSNYGKSPKSSYDNKQTSPLLSAS). Residues 85–98 (NNRKNNNNNNNNNN) show a composition bias toward low complexity. Residues 99–125 (ATSPKDSSIIGKNNVNSDLSKVSSSLN) show a composition bias toward polar residues. Residues 136 to 199 (STSSTPTSTP…KQQSKQQATQ (64 aa)) are compositionally biased toward low complexity. The segment covering 200-244 (QDKKDKEQQQQQQDKQDKESNEIKGSKEVAKDGQHGVKQFDDPKQ) has biased composition (basic and acidic residues).

This sequence belongs to the eIF-2B alpha/beta/delta subunits family. As to quaternary structure, component of the translation initiation factor 2B (eIF2B) complex which is a heterodecamer of two sets of five different subunits: alpha, beta, gamma, delta and epsilon. Subunits alpha, beta and delta comprise a regulatory subcomplex and subunits epsilon and gamma comprise a catalytic subcomplex. Within the complex, the hexameric regulatory complex resides at the center, with the two heterodimeric catalytic subcomplexes bound on opposite sides.

The protein localises to the cytoplasm. The protein resides in the cytosol. Acts as a component of the translation initiation factor 2B (eIF2B) complex, which catalyzes the exchange of GDP for GTP on eukaryotic initiation factor 2 (eIF2) gamma subunit. Its guanine nucleotide exchange factor activity is repressed when bound to eIF2 complex phosphorylated on the alpha subunit, thereby limiting the amount of methionyl-initiator methionine tRNA available to the ribosome and consequently global translation is repressed. This is Translation initiation factor eIF2B subunit delta (eif2b4) from Dictyostelium discoideum (Social amoeba).